Here is a 232-residue protein sequence, read N- to C-terminus: tRNA (guanine-N(7)-)-methyltransferase (232 aa).

Residues Glu-63, Glu-88, Asp-115, and Asp-137 each contribute to the S-adenosyl-L-methionine site. Residue Asp-137 is part of the active site. Substrate contacts are provided by residues Lys-141, Asp-173, and 211–214 (TRYE).

It belongs to the class I-like SAM-binding methyltransferase superfamily. TrmB family.

It catalyses the reaction guanosine(46) in tRNA + S-adenosyl-L-methionine = N(7)-methylguanosine(46) in tRNA + S-adenosyl-L-homocysteine. The protein operates within tRNA modification; N(7)-methylguanine-tRNA biosynthesis. Catalyzes the formation of N(7)-methylguanine at position 46 (m7G46) in tRNA. The chain is tRNA (guanine-N(7)-)-methyltransferase from Chelativorans sp. (strain BNC1).